The following is a 102-amino-acid chain: Methane monooxygenase component D (102 aa).

As to quaternary structure, the soluble methane monooxygenase (sMMO) consists of four components A/MMOH (composed of alpha/MmoX, beta/MmoY and gamma/MmoZ), B/MMOB (MmoB), C/MMOR (MmoC) and D/MMOD (MmoD).

This is Methane monooxygenase component D (mmoD) from Methylosinus trichosporium.